We begin with the raw amino-acid sequence, 558 residues long: Vanin-like protein 1 (558 aa).

The signal sequence occupies residues 1 to 22 (MSNTWWWLSVVLLILGLMPGMS). In terms of domain architecture, CN hydrolase spans 33–299 (YTAGVVEFKQ…RAIYVAQVPK (267 aa)). A glycan (N-linked (GlcNAc...) asparagine) is linked at Asn-65. Glu-76 serves as the catalytic Proton acceptor. N-linked (GlcNAc...) asparagine glycosylation is found at Asn-103, Asn-120, and Asn-128. The active-site Proton donor is Lys-171. Asn-180 carries N-linked (GlcNAc...) asparagine glycosylation. The Nucleophile role is filled by Cys-203. Residues Asn-354 and Asn-379 are each glycosylated (N-linked (GlcNAc...) asparagine). The GPI-anchor amidated serine moiety is linked to residue Ser-531. Positions 532–558 (GSPGLRILGGWLAMPLIILAIARTMSS) are cleaved as a propeptide — removed in mature form.

Belongs to the carbon-nitrogen hydrolase superfamily. BTD/VNN family. As to expression, expressed in larvae and early pupae. Expressed in third instar larvae.

The protein resides in the cell membrane. This chain is Vanin-like protein 1, found in Drosophila melanogaster (Fruit fly).